The sequence spans 56 residues: Small ribosomal subunit protein uS14 (56 aa).

C21, C24, C39, and C42 together coordinate Zn(2+).

It belongs to the universal ribosomal protein uS14 family. In terms of assembly, component of the 40S small ribosomal subunit. It depends on Zn(2+) as a cofactor.

It localises to the cytoplasm. The protein localises to the cytosol. Its subcellular location is the rough endoplasmic reticulum. This is Small ribosomal subunit protein uS14 (RpS29) from Culex quinquefasciatus (Southern house mosquito).